The following is an 84-amino-acid chain: U7-ctenitoxin-Pn1a (84 aa).

The signal sequence occupies residues 1–17 (MKLCILLVVLLITVVRA). Residues 18 to 38 (EEDILENEAEDISPAIKERSA) constitute a propeptide that is removed on maturation. 4 disulfides stabilise this stretch: Cys-41–Cys-56, Cys-48–Cys-61, Cys-55–Cys-78, and Cys-63–Cys-76.

As to expression, expressed by the venom gland.

The protein localises to the secreted. In terms of biological role, antagonist of L-type calcium channels (Cav1/CACNA1). Causes paralysis in the posterior limbs and gradual decreases in movement and aggression during 24 hours at dose levels of 5 ug per mouse. The chain is U7-ctenitoxin-Pn1a from Phoneutria nigriventer (Brazilian armed spider).